We begin with the raw amino-acid sequence, 123 residues long: Large ribosomal subunit protein uL24 (123 aa).

The protein belongs to the universal ribosomal protein uL24 family. Part of the 50S ribosomal subunit.

Functionally, one of two assembly initiator proteins, it binds directly to the 5'-end of the 23S rRNA, where it nucleates assembly of the 50S subunit. Its function is as follows. Located at the polypeptide exit tunnel on the outside of the subunit. The sequence is that of Large ribosomal subunit protein uL24 from Pyrobaculum islandicum (strain DSM 4184 / JCM 9189 / GEO3).